The chain runs to 209 residues: LexA repressor (209 aa).

The segment at residues 32-52 is a DNA-binding region (H-T-H motif); it reads VREIGKAVDLSSTSTVHGHLA. Active-site for autocatalytic cleavage activity residues include Ser-131 and Lys-169.

Belongs to the peptidase S24 family. In terms of assembly, homodimer.

The catalysed reaction is Hydrolysis of Ala-|-Gly bond in repressor LexA.. Functionally, represses a number of genes involved in the response to DNA damage (SOS response), including recA and lexA. In the presence of single-stranded DNA, RecA interacts with LexA causing an autocatalytic cleavage which disrupts the DNA-binding part of LexA, leading to derepression of the SOS regulon and eventually DNA repair. This is LexA repressor from Enterococcus faecalis (strain ATCC 700802 / V583).